A 160-amino-acid chain; its full sequence is Ribonuclease P protein component 2 (160 aa).

The protein belongs to the eukaryotic/archaeal RNase P protein component 2 family. In terms of assembly, consists of a catalytic RNA component and at least 4-5 protein subunits.

It is found in the cytoplasm. The enzyme catalyses Endonucleolytic cleavage of RNA, removing 5'-extranucleotides from tRNA precursor.. In terms of biological role, part of ribonuclease P, a protein complex that generates mature tRNA molecules by cleaving their 5'-ends. This Methanosphaerula palustris (strain ATCC BAA-1556 / DSM 19958 / E1-9c) protein is Ribonuclease P protein component 2.